Reading from the N-terminus, the 215-residue chain is Chloramphenicol acetyltransferase (215 aa).

His189 serves as the catalytic Proton acceptor.

This sequence belongs to the chloramphenicol acetyltransferase family. As to quaternary structure, homotrimer.

The catalysed reaction is chloramphenicol + acetyl-CoA = chloramphenicol 3-acetate + CoA. In terms of biological role, this enzyme is an effector of chloramphenicol resistance in bacteria. The polypeptide is Chloramphenicol acetyltransferase (cat) (Staphylococcus aureus).